Here is a 412-residue protein sequence, read N- to C-terminus: Tyrosine--tRNA ligase (412 aa).

The short motif at 56 to 65 is the 'HIGH' region element; the sequence is PSAPDVHIGH. Positions 240–244 match the 'KMSKS' region motif; sequence KMSKS. Lys-243 serves as a coordination point for ATP. An S4 RNA-binding domain is found at 351–412; the sequence is VWIVDLLVTL…GKRKFKKLVR (62 aa).

It belongs to the class-I aminoacyl-tRNA synthetase family. TyrS type 2 subfamily. Homodimer.

It is found in the cytoplasm. It catalyses the reaction tRNA(Tyr) + L-tyrosine + ATP = L-tyrosyl-tRNA(Tyr) + AMP + diphosphate + H(+). Functionally, catalyzes the attachment of tyrosine to tRNA(Tyr) in a two-step reaction: tyrosine is first activated by ATP to form Tyr-AMP and then transferred to the acceptor end of tRNA(Tyr). This chain is Tyrosine--tRNA ligase, found in Halalkalibacterium halodurans (strain ATCC BAA-125 / DSM 18197 / FERM 7344 / JCM 9153 / C-125) (Bacillus halodurans).